The following is a 230-amino-acid chain: Iron-dependent repressor IdeR (230 aa).

The region spanning 4–65 (LVDTTEMYLR…VAGDRHLELT (62 aa)) is the HTH dtxR-type domain.

This sequence belongs to the DtxR/MntR family. Homodimer.

The protein resides in the cytoplasm. Functionally, metal-dependent DNA-binding protein that controls transcription of many genes involved in iron metabolism. The chain is Iron-dependent repressor IdeR (ideR) from Mycobacterium bovis (strain ATCC BAA-935 / AF2122/97).